Reading from the N-terminus, the 93-residue chain is Small ribosomal subunit protein uS19 (93 aa).

This sequence belongs to the universal ribosomal protein uS19 family.

Its function is as follows. Protein S19 forms a complex with S13 that binds strongly to the 16S ribosomal RNA. The sequence is that of Small ribosomal subunit protein uS19 from Pediococcus pentosaceus (strain ATCC 25745 / CCUG 21536 / LMG 10740 / 183-1w).